An 88-amino-acid polypeptide reads, in one-letter code: VRQELKLELKQGFKSRIEDVREEILRKRRAGKLPGDTTSILKQWWQEHSKWPYPTEDDKAKLVEETGLQLKQINNWFINQRKRNWHNN.

The 21-residue stretch at 4–24 (ELKLELKQGFKSRIEDVREEI) folds into the ELK domain. The homeobox; TALE-type DNA-binding region spans 25 to 88 (LRKRRAGKLP…NQRKRNWHNN (64 aa)).

This sequence belongs to the TALE/KNOX homeobox family. In terms of tissue distribution, highly expressed in the roots.

It localises to the nucleus. This chain is Homeobox protein knotted-1-like 1 (KNOX1), found in Zea mays (Maize).